A 552-amino-acid chain; its full sequence is uncharacterized protein (552 aa).

Positions 8–200 constitute a DhaL domain; that stretch reads KLFAEMIIQG…LAIVYAGFLK (193 aa).

This is an uncharacterized protein from Staphylococcus saprophyticus subsp. saprophyticus (strain ATCC 15305 / DSM 20229 / NCIMB 8711 / NCTC 7292 / S-41).